A 139-amino-acid polypeptide reads, in one-letter code: Putative pre-16S rRNA nuclease (139 aa).

This sequence belongs to the YqgF nuclease family.

It is found in the cytoplasm. Its function is as follows. Could be a nuclease involved in processing of the 5'-end of pre-16S rRNA. This Phocaeicola vulgatus (strain ATCC 8482 / DSM 1447 / JCM 5826 / CCUG 4940 / NBRC 14291 / NCTC 11154) (Bacteroides vulgatus) protein is Putative pre-16S rRNA nuclease.